Here is a 332-residue protein sequence, read N- to C-terminus: Glyceraldehyde-3-phosphate dehydrogenase 1 (332 aa).

Arg-11, Ile-12, Asp-33, and Thr-120 together coordinate NAD(+). D-glyceraldehyde 3-phosphate is bound by residues 149–151 (SCT), Thr-180, 209–210 (TG), and Arg-232. Residue Cys-150 is the Nucleophile of the active site. Residues Asn-314 and Tyr-318 each contribute to the NAD(+) site.

This sequence belongs to the glyceraldehyde-3-phosphate dehydrogenase family. Homotetramer.

Its subcellular location is the cytoplasm. The enzyme catalyses D-glyceraldehyde 3-phosphate + phosphate + NAD(+) = (2R)-3-phospho-glyceroyl phosphate + NADH + H(+). The catalysed reaction is NADH + H2O = (6R)-NADHX. It carries out the reaction NADH + H2O = (6S)-NADHX. It catalyses the reaction NADPH + H2O = (6R)-NADPHX. The enzyme catalyses NADPH + H2O = (6S)-NADPHX. The protein operates within carbohydrate degradation; glycolysis; pyruvate from D-glyceraldehyde 3-phosphate: step 1/5. Its function is as follows. Glyceraldehyde-3-phosphate dehydrogenase (GAPDH) involved in glycolysis and gluconeogenesis. Catalyzes the reaction of glyceraldehyde-3-phosphate to 1,3 bis-phosphoglycerate. The contribution of the TDH1, TDH2, and TDH3 to the total glyceraldehyde-3-phosphate dehydrogenase activity is 10-15, 25-30, and 50-60%, respectively. May be involved in a process other than glycolysis because it is synthesized by cells in stationary phase. In terms of biological role, as a side activity, catalyzes the hydration of the nicotinamide ring of NADH or NADPH at the C6 position to give the corresponding hydrates, NADHX and NADPHX, which exist as R and S epimers, that cannot act as electron donors or acceptors and inhibit several dehydrogenases, making them toxic. In Saccharomyces cerevisiae (strain ATCC 204508 / S288c) (Baker's yeast), this protein is Glyceraldehyde-3-phosphate dehydrogenase 1.